The sequence spans 490 residues: Protein LMBR1L (490 aa).

The Extracellular segment spans residues methionine 1 to arginine 21. The interval methionine 1 to threonine 59 is interaction with LGB. Residues methionine 1 to leucine 76 form an LCN1-binding region. Residues glutamate 22 to threonine 42 traverse the membrane as a helical segment. Over arginine 43–glutamate 66 the chain is Cytoplasmic. Residues leucine 67–isoleucine 87 form a helical membrane-spanning segment. The Extracellular portion of the chain corresponds to serine 88–asparagine 114. The chain crosses the membrane as a helical span at residues leucine 115 to threonine 135. Residues glutamate 136 to threonine 154 lie on the Cytoplasmic side of the membrane. A helical membrane pass occupies residues valine 155–isoleucine 175. The Extracellular portion of the chain corresponds to leucine 176–tyrosine 196. Residues leucine 197–leucine 217 traverse the membrane as a helical segment. Residues alanine 218–cysteine 305 lie on the Cytoplasmic side of the membrane. A helical transmembrane segment spans residues leucine 306–isoleucine 326. Over aspartate 327–serine 350 the chain is Extracellular. The chain crosses the membrane as a helical span at residues phenylalanine 351 to phenylalanine 371. Residues tyrosine 372 to alanine 388 are Cytoplasmic-facing. Residues methionine 389–phenylalanine 409 traverse the membrane as a helical segment. The Extracellular segment spans residues serine 410–glycine 431. The chain crosses the membrane as a helical span at residues asparagine 432–valine 452. Over lysine 453–glutamine 490 the chain is Cytoplasmic.

Belongs to the LIMR family. As to quaternary structure, dimer. Can also form higher oligomers. Interacts with LCN1; this interaction mediates the endocytosis of LCN1. Interacts with UBAC2, FAF2, VCP, AMFR, ZNRF3, CTNNB1, LRP6, GSK3A, GSK3B, FZD6, DVL2 and RNF43. Interaction with LGB and SCGB1A1 is controversial.

It localises to the cell membrane. Its subcellular location is the endoplasmic reticulum membrane. Plays an essential role in lymphocyte development by negatively regulating the canonical Wnt signaling pathway. In association with UBAC2 and E3 ubiquitin-protein ligase AMFR, promotes the ubiquitin-mediated degradation of CTNNB1 and Wnt receptors FZD6 and LRP6. LMBR1L stabilizes the beta-catenin destruction complex that is required for regulating CTNNB1 levels. Acts as a LCN1 receptor and can mediate its endocytosis. This Pongo abelii (Sumatran orangutan) protein is Protein LMBR1L (LMBR1L).